Here is a 320-residue protein sequence, read N- to C-terminus: ATP-dependent 6-phosphofructokinase (320 aa).

Gly12 lines the ATP pocket. 22–26 (RGVVR) contributes to the ADP binding site. Residues 73 to 74 (RF) and 103 to 106 (GDGS) contribute to the ATP site. Asp104 lines the Mg(2+) pocket. Substrate is bound at residue 126–128 (TID). Asp128 functions as the Proton acceptor in the catalytic mechanism. An ADP-binding site is contributed by Arg155. Residues Arg163 and 170 to 172 (MGR) each bind substrate. ADP-binding positions include 186–188 (GCE), Lys212, and 214–216 (KKH). Substrate-binding positions include Glu223, Arg244, and 250–253 (HIQR).

The protein belongs to the phosphofructokinase type A (PFKA) family. ATP-dependent PFK group I subfamily. Prokaryotic clade 'B1' sub-subfamily. As to quaternary structure, homotetramer. It depends on Mg(2+) as a cofactor.

The protein localises to the cytoplasm. The enzyme catalyses beta-D-fructose 6-phosphate + ATP = beta-D-fructose 1,6-bisphosphate + ADP + H(+). The protein operates within carbohydrate degradation; glycolysis; D-glyceraldehyde 3-phosphate and glycerone phosphate from D-glucose: step 3/4. Allosterically activated by ADP and other diphosphonucleosides, and allosterically inhibited by phosphoenolpyruvate. In terms of biological role, catalyzes the phosphorylation of D-fructose 6-phosphate to fructose 1,6-bisphosphate by ATP, the first committing step of glycolysis. The sequence is that of ATP-dependent 6-phosphofructokinase from Edwardsiella ictaluri (strain 93-146).